The chain runs to 481 residues: ATP synthase subunit beta (481 aa).

An ATP-binding site is contributed by 167–174; the sequence is GGAGVGKT.

Belongs to the ATPase alpha/beta chains family. F-type ATPases have 2 components, CF(1) - the catalytic core - and CF(0) - the membrane proton channel. CF(1) has five subunits: alpha(3), beta(3), gamma(1), delta(1), epsilon(1). CF(0) has three main subunits: a(1), b(2) and c(9-12). The alpha and beta chains form an alternating ring which encloses part of the gamma chain. CF(1) is attached to CF(0) by a central stalk formed by the gamma and epsilon chains, while a peripheral stalk is formed by the delta and b chains.

It localises to the cell membrane. It carries out the reaction ATP + H2O + 4 H(+)(in) = ADP + phosphate + 5 H(+)(out). Functionally, produces ATP from ADP in the presence of a proton gradient across the membrane. The catalytic sites are hosted primarily by the beta subunits. The chain is ATP synthase subunit beta from Corynebacterium efficiens (strain DSM 44549 / YS-314 / AJ 12310 / JCM 11189 / NBRC 100395).